The sequence spans 392 residues: Probable nucleoredoxin 3 (392 aa).

2 consecutive Thioredoxin domains span residues 17-171 (LYSI…DSKR) and 177-326 (EKLL…ELKA).

It belongs to the nucleoredoxin family.

The catalysed reaction is [protein]-dithiol + NAD(+) = [protein]-disulfide + NADH + H(+). It catalyses the reaction [protein]-dithiol + NADP(+) = [protein]-disulfide + NADPH + H(+). Probable thiol-disulfide oxidoreductase that may participate in various redox reactions. The chain is Probable nucleoredoxin 3 from Arabidopsis thaliana (Mouse-ear cress).